A 378-amino-acid polypeptide reads, in one-letter code: Succinyl-diaminopimelate desuccinylase (378 aa).

H67 is a binding site for Zn(2+). D69 is an active-site residue. A Zn(2+)-binding site is contributed by D100. E134 functions as the Proton acceptor in the catalytic mechanism. The Zn(2+) site is built by E135, E163, and H349.

This sequence belongs to the peptidase M20A family. DapE subfamily. As to quaternary structure, homodimer. The cofactor is Zn(2+). Co(2+) is required as a cofactor.

It carries out the reaction N-succinyl-(2S,6S)-2,6-diaminopimelate + H2O = (2S,6S)-2,6-diaminopimelate + succinate. It participates in amino-acid biosynthesis; L-lysine biosynthesis via DAP pathway; LL-2,6-diaminopimelate from (S)-tetrahydrodipicolinate (succinylase route): step 3/3. Its function is as follows. Catalyzes the hydrolysis of N-succinyl-L,L-diaminopimelic acid (SDAP), forming succinate and LL-2,6-diaminopimelate (DAP), an intermediate involved in the bacterial biosynthesis of lysine and meso-diaminopimelic acid, an essential component of bacterial cell walls. This is Succinyl-diaminopimelate desuccinylase from Pasteurella multocida (strain Pm70).